The following is a 590-amino-acid chain: Aspartate--tRNA(Asp/Asn) ligase (590 aa).

E178 is a binding site for L-aspartate. Positions 202–205 (QIYK) are aspartate. R224 is a binding site for L-aspartate. ATP is bound by residues 224–226 (RDE) and Q233. H453 is a binding site for L-aspartate. E487 contacts ATP. R494 contacts L-aspartate. 539 to 542 (GLDR) is an ATP binding site.

Belongs to the class-II aminoacyl-tRNA synthetase family. Type 1 subfamily. In terms of assembly, homodimer.

It localises to the cytoplasm. It catalyses the reaction tRNA(Asx) + L-aspartate + ATP = L-aspartyl-tRNA(Asx) + AMP + diphosphate. Functionally, aspartyl-tRNA synthetase with relaxed tRNA specificity since it is able to aspartylate not only its cognate tRNA(Asp) but also tRNA(Asn). Reaction proceeds in two steps: L-aspartate is first activated by ATP to form Asp-AMP and then transferred to the acceptor end of tRNA(Asp/Asn). The chain is Aspartate--tRNA(Asp/Asn) ligase from Treponema denticola (strain ATCC 35405 / DSM 14222 / CIP 103919 / JCM 8153 / KCTC 15104).